Consider the following 51-residue polypeptide: Insulin (51 aa).

Disulfide bonds link Cys8–Cys37, Cys20–Cys50, and Cys36–Cys41.

This sequence belongs to the insulin family. In terms of assembly, heterodimer of a B chain and an A chain linked by two disulfide bonds.

It localises to the secreted. Functionally, insulin decreases blood glucose concentration. It increases cell permeability to monosaccharides, amino acids and fatty acids. It accelerates glycolysis, the pentose phosphate cycle, and glycogen synthesis in liver. The polypeptide is Insulin (ins) (Platichthys flesus (European flounder)).